Here is a 247-residue protein sequence, read N- to C-terminus: Adenosylcobinamide-GDP ribazoletransferase (247 aa).

The next 6 membrane-spanning stretches (helical) occupy residues 34 to 54, 59 to 79, 113 to 133, 138 to 158, 171 to 193, and 197 to 219; these read IVMFPFIGLILGGVSGLIFIL, CGIPLAALFCILALALLTGGF, GGLALIFVLLAKILVVSELAL, MLAALAAACAAGRGSAVLLMY, VFIGKVSGRQTCITLGLAIIIAT, and PGMQGLAAMVVTCAAIFILGQLL.

It belongs to the CobS family. The cofactor is Mg(2+).

The protein resides in the cell inner membrane. The enzyme catalyses alpha-ribazole + adenosylcob(III)inamide-GDP = adenosylcob(III)alamin + GMP + H(+). The catalysed reaction is alpha-ribazole 5'-phosphate + adenosylcob(III)inamide-GDP = adenosylcob(III)alamin 5'-phosphate + GMP + H(+). Its pathway is cofactor biosynthesis; adenosylcobalamin biosynthesis; adenosylcobalamin from cob(II)yrinate a,c-diamide: step 7/7. In terms of biological role, joins adenosylcobinamide-GDP and alpha-ribazole to generate adenosylcobalamin (Ado-cobalamin). Also synthesizes adenosylcobalamin 5'-phosphate from adenosylcobinamide-GDP and alpha-ribazole 5'-phosphate. This chain is Adenosylcobinamide-GDP ribazoletransferase, found in Salmonella newport (strain SL254).